We begin with the raw amino-acid sequence, 221 residues long: Oxaloacetate tautomerase FAHD1, mitochondrial (221 aa).

Residues 1-24 constitute a mitochondrion transit peptide; it reads MAASRPLSRFWEWGKNIVCVGRNY. Serine 37 is modified (phosphoserine). Mg(2+) contacts are provided by glutamate 68, glutamate 70, and aspartate 99. The residue at position 110 (lysine 110) is an N6-acetyllysine. Residue lysine 112 is modified to N6-succinyllysine.

It belongs to the FAH family. As to quaternary structure, homodimer. Requires Mg(2+) as cofactor. Mn(2+) serves as cofactor.

Its subcellular location is the mitochondrion. It localises to the cytoplasm. The protein resides in the cytosol. The catalysed reaction is oxaloacetate = enol-oxaloacetate. It catalyses the reaction oxaloacetate + H(+) = pyruvate + CO2. It carries out the reaction a 3-acylpyruvate + H2O = a carboxylate + pyruvate + H(+). The enzyme catalyses acetylpyruvate + H2O = acetate + pyruvate + H(+). The catalysed reaction is 3-fumarylpyruvate + H2O = fumarate + pyruvate + H(+). Oxaloacetate decarboxylation is competitively inhibited by oxalate. Tautomerase that converts enol-oxaloacetate, a strong inhibitor of succinate dehydrogenase, to the physiological keto form of oxaloacetate. It is thereby required to maximize aerobic respiration efficiency by preventing succinate dehydrogenase inhibition. Also acts as a weak oxaloacetate decarboxylase (ODx), catalyzing the decarboxylation of oxaloacetate (OAA) to pyruvate and CO(2), and as such is likely a regulatory enzyme in the TCA cycle. Also displays acylpyruvase activity, being able to hydrolyze acetylpyruvate and fumarylpyruvate in vitro. The chain is Oxaloacetate tautomerase FAHD1, mitochondrial from Bos taurus (Bovine).